The following is a 338-amino-acid chain: UDP-3-O-acylglucosamine N-acyltransferase (338 aa).

Histidine 251 serves as the catalytic Proton acceptor.

It belongs to the transferase hexapeptide repeat family. LpxD subfamily. In terms of assembly, homotrimer.

The enzyme catalyses a UDP-3-O-[(3R)-3-hydroxyacyl]-alpha-D-glucosamine + a (3R)-hydroxyacyl-[ACP] = a UDP-2-N,3-O-bis[(3R)-3-hydroxyacyl]-alpha-D-glucosamine + holo-[ACP] + H(+). It participates in bacterial outer membrane biogenesis; LPS lipid A biosynthesis. In terms of biological role, catalyzes the N-acylation of UDP-3-O-acylglucosamine using 3-hydroxyacyl-ACP as the acyl donor. Is involved in the biosynthesis of lipid A, a phosphorylated glycolipid that anchors the lipopolysaccharide to the outer membrane of the cell. The protein is UDP-3-O-acylglucosamine N-acyltransferase of Psychrobacter cryohalolentis (strain ATCC BAA-1226 / DSM 17306 / VKM B-2378 / K5).